A 771-amino-acid chain; its full sequence is Hyperosmolality-gated Ca2+ permeable channel 1.3 (771 aa).

The chain crosses the membrane as a helical span at residues Ile7–Ile27. A Phosphoserine modification is found at Ser54. A run of 9 helical transmembrane segments spans residues Ile101–Val121, Phe158–Lys178, Leu375–Val395, Phe427–Met447, Tyr467–Glu487, Ala512–Leu532, Pro584–Phe604, Ile630–Ala650, and Ala651–Cys671. The interval Val744–Lys771 is disordered. The segment covering Arg751 to Lys771 has biased composition (polar residues).

Belongs to the CSC1 (TC 1.A.17) family. In terms of processing, phosphorylated at Ser-54 by BIK1 in response to pathogen-associated molecular pattern (PAMP) perception, promoting its activation. Preferentially expressed in guard cells.

It localises to the cell membrane. The catalysed reaction is Ca(2+)(in) = Ca(2+)(out). Its activity is regulated as follows. Activated following phosphorylation at Ser-54 by BIK1. Functionally, calcium-permeable channel that plays a key role in plant stomatal immunity. In response to pathogen-associated molecular pattern (PAMP) perception, phosphorylated and activated by BIK1, triggering rapid influx of calcium ions across the plasma membrane, leading to stomatal closure. This is Hyperosmolality-gated Ca2+ permeable channel 1.3 from Arabidopsis thaliana (Mouse-ear cress).